We begin with the raw amino-acid sequence, 505 residues long: Probable malate:quinone oxidoreductase (505 aa).

This sequence belongs to the MQO family. Requires FAD as cofactor.

The enzyme catalyses (S)-malate + a quinone = a quinol + oxaloacetate. It participates in carbohydrate metabolism; tricarboxylic acid cycle; oxaloacetate from (S)-malate (quinone route): step 1/1. This Pseudomonas fluorescens protein is Probable malate:quinone oxidoreductase.